A 400-amino-acid polypeptide reads, in one-letter code: Elongation factor Tu (400 aa).

Residues 10–210 (KPHVNVGTIG…ALDSYIPEPV (201 aa)) enclose the tr-type G domain. Residues 19–26 (GHVDHGKT) are G1. GTP is bound at residue 19-26 (GHVDHGKT). Thr26 serves as a coordination point for Mg(2+). The G2 stretch occupies residues 66–70 (ILTIA). Residues 87-90 (DCPG) are G3. Residues 87 to 91 (DCPGH) and 142 to 145 (NKCD) contribute to the GTP site. The segment at 142 to 145 (NKCD) is G4. A G5 region spans residues 180–182 (SAI).

Belongs to the TRAFAC class translation factor GTPase superfamily. Classic translation factor GTPase family. EF-Tu/EF-1A subfamily. As to quaternary structure, monomer.

It is found in the cytoplasm. It carries out the reaction GTP + H2O = GDP + phosphate + H(+). Functionally, GTP hydrolase that promotes the GTP-dependent binding of aminoacyl-tRNA to the A-site of ribosomes during protein biosynthesis. The sequence is that of Elongation factor Tu from Gemmatimonas aurantiaca (strain DSM 14586 / JCM 11422 / NBRC 100505 / T-27).